The chain runs to 471 residues: Putative multidrug resistance protein MdtD (471 aa).

At 1–11 (MTDLPDSTRWQ) the chain is on the periplasmic side. The helical transmembrane segment at 12–32 (LWIVAFGFFMQSLDTTIVNTA) threads the bilayer. The Cytoplasmic segment spans residues 33 to 48 (LPSMAQSLGESPLHMH). The chain crosses the membrane as a helical span at residues 49-69 (MVIVSYVLTVAVMLPASGWLA). At 70–76 (DKVGVRN) the chain is on the periplasmic side. A helical transmembrane segment spans residues 77–97 (IFFTAIVLFTLGSLFCALSGT). The Cytoplasmic portion of the chain corresponds to 98-101 (LNEL). A helical transmembrane segment spans residues 102–124 (LLARALQGVGGAMMVPVGRLTVM). The Periplasmic segment spans residues 125-137 (KIVPREQYMAAMT). Residues 138-158 (FVTLPGQVGPLLGPALGGLLV) form a helical membrane-spanning segment. The Cytoplasmic segment spans residues 159-164 (EYASWH). The helical transmembrane segment at 165–185 (WIFLINIPVGIIGAIATLMLM) threads the bilayer. The Periplasmic segment spans residues 186–196 (PNYTMQTRRFD). A helical transmembrane segment spans residues 197–217 (LSGFLLLAVGMAVLTLALDGS). Over 218–224 (KGTGLSP) the chain is Cytoplasmic. A helical transmembrane segment spans residues 225 to 245 (LAIAGLVAVGVVALVLYLLHA). Residues 246–262 (RNNNRALFSLKLFRTRT) lie on the Periplasmic side of the membrane. The helical transmembrane segment at 263-283 (FSLGLAGSFAGRIGSGMLPFM) threads the bilayer. At 284-285 (TP) the chain is on the cytoplasmic side. The chain crosses the membrane as a helical span at residues 286–306 (VFLQIGLGFSPFHAGLMMIPM). At 307–341 (VLGSMGMKRIVVQVVNRFGYRRVLVATTLGLSLVT) the chain is on the periplasmic side. The helical transmembrane segment at 342 to 362 (LLFMTTALLGWYYVLPFVLFL) threads the bilayer. Residues 363-395 (QGMVNSTRFSSMNTLTLKDLPDNLASSGNSLLS) lie on the Cytoplasmic side of the membrane. A helical transmembrane segment spans residues 396–416 (MIMQLSMSIGVTIAGLLLGLF). The Periplasmic portion of the chain corresponds to 417–430 (GSQHVSVDSGTTQT). A helical transmembrane segment spans residues 431–451 (VFMYTWLSMAFIIALPAFIFA). Residues 452-471 (RVPNDTHQNVAISRRKRSAQ) lie on the Cytoplasmic side of the membrane.

This sequence belongs to the major facilitator superfamily. TCR/Tet family.

The protein localises to the cell inner membrane. The sequence is that of Putative multidrug resistance protein MdtD from Escherichia coli (strain SMS-3-5 / SECEC).